Consider the following 99-residue polypeptide: NADH-quinone oxidoreductase subunit K (99 aa).

Helical transmembrane passes span 3-23 (PMYYLYLSAVLFTLGAVGVLL), 28-48 (IIVFMCVELMLNAANLALVTF), and 62-82 (FFVMVVAAAEVVVGLAIIVAI).

This sequence belongs to the complex I subunit 4L family. NDH-1 is composed of 14 different subunits. Subunits NuoA, H, J, K, L, M, N constitute the membrane sector of the complex.

The protein localises to the cell membrane. It carries out the reaction a quinone + NADH + 5 H(+)(in) = a quinol + NAD(+) + 4 H(+)(out). Its function is as follows. NDH-1 shuttles electrons from NADH, via FMN and iron-sulfur (Fe-S) centers, to quinones in the respiratory chain. The immediate electron acceptor for the enzyme in this species is believed to be a menaquinone. Couples the redox reaction to proton translocation (for every two electrons transferred, four hydrogen ions are translocated across the cytoplasmic membrane), and thus conserves the redox energy in a proton gradient. This chain is NADH-quinone oxidoreductase subunit K, found in Acidothermus cellulolyticus (strain ATCC 43068 / DSM 8971 / 11B).